Here is a 260-residue protein sequence, read N- to C-terminus: Carbonic anhydrase 3 (260 aa).

Position 2 is an N-acetylalanine (Ala-2). The Alpha-carbonic anhydrase domain maps to 3 to 259; sequence KEWGYADHNG…IKGRIVKASF (257 aa). 4 positions are modified to phosphoserine: Ser-29, Ser-43, Ser-50, and Ser-55. Residues 64 to 67 are involved in proton transfer; it reads KTCR. At Thr-73 the chain carries Phosphothreonine. Zn(2+) contacts are provided by His-94, His-96, and His-119. At Tyr-127 the chain carries Phosphotyrosine. 2 positions are modified to S-glutathionyl cysteine: Cys-182 and Cys-187. 198-199 lines the substrate pocket; the sequence is TT. Thr-216 carries the post-translational modification Phosphothreonine. Ser-219 carries the phosphoserine modification.

The protein belongs to the alpha-carbonic anhydrase family. The cofactor is Zn(2+). Post-translationally, S-thiolated both by thiol-disulfide exchange with glutathione disulfide and by oxyradical-initiated S-thiolation with reduced glutathione. S-glutathionylated in hepatocytes under oxidative stress.

Its subcellular location is the cytoplasm. It catalyses the reaction hydrogencarbonate + H(+) = CO2 + H2O. Its activity is regulated as follows. Inhibited by acetazolamide. Its function is as follows. Reversible hydration of carbon dioxide. The polypeptide is Carbonic anhydrase 3 (CA3) (Bos taurus (Bovine)).